A 221-amino-acid chain; its full sequence is PKHD-type hydroxylase P9215_13741 (221 aa).

The Fe2OG dioxygenase domain occupies 80 to 174; the sequence is RIHGTMFTKT…RFVVVGWIES (95 aa). Fe cation is bound by residues His-98, Asp-100, and His-155. Arg-165 is a 2-oxoglutarate binding site.

Fe(2+) serves as cofactor. Requires L-ascorbate as cofactor.

The chain is PKHD-type hydroxylase P9215_13741 from Prochlorococcus marinus (strain MIT 9215).